The following is a 361-amino-acid chain: Ribosomal RNA large subunit methyltransferase M (361 aa).

Residues Ser187, 220 to 223 (CPGG), Asp239, Asp259, and Asp276 contribute to the S-adenosyl-L-methionine site. Lys305 (proton acceptor) is an active-site residue.

The protein belongs to the class I-like SAM-binding methyltransferase superfamily. RNA methyltransferase RlmE family. RlmM subfamily. As to quaternary structure, monomer.

The protein localises to the cytoplasm. The enzyme catalyses cytidine(2498) in 23S rRNA + S-adenosyl-L-methionine = 2'-O-methylcytidine(2498) in 23S rRNA + S-adenosyl-L-homocysteine + H(+). In terms of biological role, catalyzes the 2'-O-methylation at nucleotide C2498 in 23S rRNA. In Shewanella baltica (strain OS223), this protein is Ribosomal RNA large subunit methyltransferase M.